A 349-amino-acid polypeptide reads, in one-letter code: DNA replication and repair protein RecF (349 aa).

29–36 (GLNGVGKT) contacts ATP.

Belongs to the RecF family.

The protein resides in the cytoplasm. The RecF protein is involved in DNA metabolism; it is required for DNA replication and normal SOS inducibility. RecF binds preferentially to single-stranded, linear DNA. It also seems to bind ATP. This Acholeplasma laidlawii (strain PG-8A) protein is DNA replication and repair protein RecF.